A 405-amino-acid polypeptide reads, in one-letter code: Acetate kinase (405 aa).

Residue Asn-7 coordinates Mg(2+). Position 14 (Lys-14) interacts with ATP. Residue Arg-99 coordinates substrate. Asp-156 serves as the catalytic Proton donor/acceptor. Residues 215 to 219, 290 to 292, and 338 to 342 each bind ATP; these read HLGNG, DMR, and GVGEH. Residue Glu-391 coordinates Mg(2+).

This sequence belongs to the acetokinase family. In terms of assembly, homodimer. The cofactor is Mg(2+). It depends on Mn(2+) as a cofactor.

The protein resides in the cytoplasm. The enzyme catalyses acetate + ATP = acetyl phosphate + ADP. It participates in metabolic intermediate biosynthesis; acetyl-CoA biosynthesis; acetyl-CoA from acetate: step 1/2. Its function is as follows. Catalyzes the formation of acetyl phosphate from acetate and ATP. Can also catalyze the reverse reaction. In Nostoc punctiforme (strain ATCC 29133 / PCC 73102), this protein is Acetate kinase.